Reading from the N-terminus, the 276-residue chain is Ribosomal RNA small subunit methyltransferase A (276 aa).

S-adenosyl-L-methionine contacts are provided by asparagine 27, leucine 29, glycine 54, glutamate 75, aspartate 101, and asparagine 122.

Belongs to the class I-like SAM-binding methyltransferase superfamily. rRNA adenine N(6)-methyltransferase family. RsmA subfamily.

The protein resides in the cytoplasm. The enzyme catalyses adenosine(1518)/adenosine(1519) in 16S rRNA + 4 S-adenosyl-L-methionine = N(6)-dimethyladenosine(1518)/N(6)-dimethyladenosine(1519) in 16S rRNA + 4 S-adenosyl-L-homocysteine + 4 H(+). In terms of biological role, specifically dimethylates two adjacent adenosines (A1518 and A1519) in the loop of a conserved hairpin near the 3'-end of 16S rRNA in the 30S particle. May play a critical role in biogenesis of 30S subunits. The polypeptide is Ribosomal RNA small subunit methyltransferase A (Brucella abortus biovar 1 (strain 9-941)).